Reading from the N-terminus, the 427-residue chain is G2/mitotic-specific cyclin-B1 (427 aa).

Residues 33-126 (ATSKPGLRPR…DTPSPSPMET (94 aa)) form a disordered region. Lys-73 bears the N6-acetyllysine mark. Basic and acidic residues predominate over residues 100-110 (EPEHVKEDKLS). At Ser-120 the chain carries Phosphoserine; by CDK1. Ser-122 bears the Phosphoserine mark. Ser-127 is subject to Phosphoserine; by PLK1. Residue Ser-141 is modified to Phosphoserine. 2 interaction with CDK2 regions span residues 163 to 171 (EYVKDIYAY) and 252 to 255 (YEEM). Thr-315 carries the post-translational modification Phosphothreonine.

Belongs to the cyclin family. Cyclin AB subfamily. As to quaternary structure, interacts with the CDC2 protein kinase to form a serine/threonine kinase holoenzyme complex also known as maturation promoting factor (MPF). The cyclin subunit imparts substrate specificity to the complex. Binds HEI10. Interacts with catalytically active RALBP1 and CDC2 during mitosis to form an endocytotic complex during interphase. Interacts with CCNF; interaction is required for nuclear localization. Interacts with CDK5RAP3. Interacts with RFPL4A and UBE2A. Interacts with INCA1. In terms of processing, ubiquitinated by the SCF(NIPA) complex during interphase, leading to its destruction. Deubiquitinated by USP22 during G2/M phase. Phosphorylated by PLK1 at Ser-127 on centrosomes during prophase: phosphorylation by PLK1 does not cause nuclear import. Phosphorylation at Ser-141 was also reported to be mediated by PLK1 but Ser-127 seems to be the primary phosphorylation site.

It localises to the cytoplasm. It is found in the nucleus. Its subcellular location is the cytoskeleton. The protein localises to the microtubule organizing center. The protein resides in the centrosome. Functionally, essential for the control of the cell cycle at the G2/M (mitosis) transition. The polypeptide is G2/mitotic-specific cyclin-B1 (CCNB1) (Bos taurus (Bovine)).